The chain runs to 482 residues: Rhamnulokinase (482 aa).

13–17 contacts ATP; the sequence is ASSGR. Substrate-binding positions include G83 and 232-234; that span reads HDT. D233 functions as the Proton acceptor in the catalytic mechanism. Position 255 (T255) interacts with ATP. N292 is a binding site for substrate. N300 is an ATP binding site. A disulfide bridge links C349 with C366. G398 is an ATP binding site. A disulfide bond links C409 and C413.

The protein belongs to the rhamnulokinase family. Requires Mg(2+) as cofactor.

The enzyme catalyses L-rhamnulose + ATP = L-rhamnulose 1-phosphate + ADP + H(+). It functions in the pathway carbohydrate degradation; L-rhamnose degradation; glycerone phosphate from L-rhamnose: step 2/3. In terms of biological role, involved in the catabolism of L-rhamnose (6-deoxy-L-mannose). Catalyzes the transfer of the gamma-phosphate group from ATP to the 1-hydroxyl group of L-rhamnulose to yield L-rhamnulose 1-phosphate. This chain is Rhamnulokinase, found in Mannheimia succiniciproducens (strain KCTC 0769BP / MBEL55E).